The primary structure comprises 1040 residues: Multidrug resistance protein MdtB (1040 aa).

The next 12 helical transmembrane spans lie at 16 to 36 (FIMR…AGII), 347 to 367 (LMMA…NIPA), 369 to 389 (IIPG…MVFL), 396 to 416 (LTLM…IVVI), 440 to 460 (IGFT…PLLF), 472 to 492 (FAIT…TLTP), 537 to 557 (WLTL…WVFI), 863 to 883 (LGST…VLGI), 888 to 908 (FIHP…ALLA), 911 to 931 (IAGS…IGIV), 968 to 988 (ILMT…STGV), and 998 to 1018 (IGMV…TPVI).

The protein belongs to the resistance-nodulation-cell division (RND) (TC 2.A.6) family. MdtB subfamily. As to quaternary structure, part of a tripartite efflux system composed of MdtA, MdtB and MdtC. MdtB forms a heteromultimer with MdtC.

The protein localises to the cell inner membrane. The MdtABC tripartite complex confers resistance against novobiocin and deoxycholate. In Escherichia coli (strain K12 / MC4100 / BW2952), this protein is Multidrug resistance protein MdtB.